Consider the following 450-residue polypeptide: 23S rRNA (uracil(1939)-C(5))-methyltransferase RlmD (450 aa).

The region spanning 1–62 (MPVAGPLDIV…PSYEQAGVVN (62 aa)) is the TRAM domain. The [4Fe-4S] cluster site is built by cysteine 75, cysteine 81, cysteine 84, and cysteine 163. S-adenosyl-L-methionine-binding residues include glutamine 271, phenylalanine 300, asparagine 305, glutamate 321, asparagine 349, and aspartate 370. Catalysis depends on cysteine 406, which acts as the Nucleophile.

The protein belongs to the class I-like SAM-binding methyltransferase superfamily. RNA M5U methyltransferase family. RlmD subfamily.

It catalyses the reaction uridine(1939) in 23S rRNA + S-adenosyl-L-methionine = 5-methyluridine(1939) in 23S rRNA + S-adenosyl-L-homocysteine + H(+). Functionally, catalyzes the formation of 5-methyl-uridine at position 1939 (m5U1939) in 23S rRNA. The sequence is that of 23S rRNA (uracil(1939)-C(5))-methyltransferase RlmD from Ralstonia pickettii (strain 12J).